A 99-amino-acid chain; its full sequence is Putative GIY-YIG domain-containing protein 242L (99 aa).

The GIY-YIG domain maps to Asn5–Gln81.

This Invertebrate iridescent virus 6 (IIV-6) protein is Putative GIY-YIG domain-containing protein 242L.